We begin with the raw amino-acid sequence, 68 residues long: Large ribosomal subunit protein bL35 (68 aa).

This sequence belongs to the bacterial ribosomal protein bL35 family.

The sequence is that of Large ribosomal subunit protein bL35 from Orientia tsutsugamushi (strain Ikeda) (Rickettsia tsutsugamushi).